Consider the following 296-residue polypeptide: Pseudouridine-5'-phosphate glycosidase (296 aa).

The active-site Proton donor is glutamate 21. Residues lysine 81 and valine 101 each coordinate substrate. Position 130 (aspartate 130) interacts with Mn(2+). 132-134 (SQD) contributes to the substrate binding site. The Nucleophile role is filled by lysine 151.

The protein belongs to the pseudouridine-5'-phosphate glycosidase family. In terms of assembly, homotrimer. Requires Mn(2+) as cofactor.

The enzyme catalyses D-ribose 5-phosphate + uracil = psi-UMP + H2O. Functionally, catalyzes the reversible cleavage of pseudouridine 5'-phosphate (PsiMP) to ribose 5-phosphate and uracil. Functions biologically in the cleavage direction, as part of a pseudouridine degradation pathway. This is Pseudouridine-5'-phosphate glycosidase from Fervidobacterium nodosum (strain ATCC 35602 / DSM 5306 / Rt17-B1).